The sequence spans 245 residues: 5-oxoprolinase subunit A (245 aa).

The protein belongs to the LamB/PxpA family. Forms a complex composed of PxpA, PxpB and PxpC.

It carries out the reaction 5-oxo-L-proline + ATP + 2 H2O = L-glutamate + ADP + phosphate + H(+). Functionally, catalyzes the cleavage of 5-oxoproline to form L-glutamate coupled to the hydrolysis of ATP to ADP and inorganic phosphate. This chain is 5-oxoprolinase subunit A, found in Chromobacterium violaceum (strain ATCC 12472 / DSM 30191 / JCM 1249 / CCUG 213 / NBRC 12614 / NCIMB 9131 / NCTC 9757 / MK).